The chain runs to 218 residues: uncharacterized protein (218 aa).

Disordered regions lie at residues 30-71 (FSHR…RSPP), 93-120 (SGRG…PRPD), and 133-209 (MEVE…PGFP). Low complexity predominate over residues 43–71 (PGAPAVVPAPVSAPRPASSPARSESRSPP). Residues 94 to 110 (GRGGGGGGGGGARTGGG) show a composition bias toward gly residues. Residues 138 to 148 (PPHPPPQPQVC) are compositionally biased toward pro residues. The span at 156–171 (PGHGRAGLPEGKGPGG) shows a compositional bias: gly residues. The segment covering 191 to 209 (RAPSPAAPRRGRLPAPGFP) has biased composition (low complexity).

This is an uncharacterized protein from Homo sapiens (Human).